The chain runs to 249 residues: DNA repair protein RecO (249 aa).

The protein belongs to the RecO family.

In terms of biological role, involved in DNA repair and RecF pathway recombination. The chain is DNA repair protein RecO from Solidesulfovibrio magneticus (strain ATCC 700980 / DSM 13731 / RS-1) (Desulfovibrio magneticus).